The following is a 229-amino-acid chain: Ribonuclease 3 (229 aa).

The 126-residue stretch at 7-132 folds into the RNase III domain; the sequence is LKAFEGRIGH…VIAAVYLDAG (126 aa). Mg(2+) is bound at residue Glu45. Residue Asp49 is part of the active site. The Mg(2+) site is built by Asp118 and Glu121. Glu121 is a catalytic residue. In terms of domain architecture, DRBM spans 157 to 226; that stretch reads DAKTALQEWA…ARALLARMEA (70 aa).

Belongs to the ribonuclease III family. In terms of assembly, homodimer. Mg(2+) is required as a cofactor.

The protein localises to the cytoplasm. The enzyme catalyses Endonucleolytic cleavage to 5'-phosphomonoester.. In terms of biological role, digests double-stranded RNA. Involved in the processing of primary rRNA transcript to yield the immediate precursors to the large and small rRNAs (23S and 16S). Processes some mRNAs, and tRNAs when they are encoded in the rRNA operon. Processes pre-crRNA and tracrRNA of type II CRISPR loci if present in the organism. The sequence is that of Ribonuclease 3 from Cereibacter sphaeroides (strain ATCC 17029 / ATH 2.4.9) (Rhodobacter sphaeroides).